Here is a 208-residue protein sequence, read N- to C-terminus: Thymidylate kinase (208 aa).

An ATP-binding site is contributed by 7–14; it reads GIDGAGKT.

It belongs to the thymidylate kinase family.

The enzyme catalyses dTMP + ATP = dTDP + ADP. Its function is as follows. Phosphorylation of dTMP to form dTDP in both de novo and salvage pathways of dTTP synthesis. This chain is Thymidylate kinase, found in Xylella fastidiosa (strain Temecula1 / ATCC 700964).